The sequence spans 203 residues: Holliday junction branch migration complex subunit RuvA (203 aa).

Residues M1–I64 are domain I. The interval T65–E143 is domain II. Positions R144 to A154 are flexible linker. The tract at residues P155–L203 is domain III.

The protein belongs to the RuvA family. In terms of assembly, homotetramer. Forms an RuvA(8)-RuvB(12)-Holliday junction (HJ) complex. HJ DNA is sandwiched between 2 RuvA tetramers; dsDNA enters through RuvA and exits via RuvB. An RuvB hexamer assembles on each DNA strand where it exits the tetramer. Each RuvB hexamer is contacted by two RuvA subunits (via domain III) on 2 adjacent RuvB subunits; this complex drives branch migration. In the full resolvosome a probable DNA-RuvA(4)-RuvB(12)-RuvC(2) complex forms which resolves the HJ.

The protein resides in the cytoplasm. Functionally, the RuvA-RuvB-RuvC complex processes Holliday junction (HJ) DNA during genetic recombination and DNA repair, while the RuvA-RuvB complex plays an important role in the rescue of blocked DNA replication forks via replication fork reversal (RFR). RuvA specifically binds to HJ cruciform DNA, conferring on it an open structure. The RuvB hexamer acts as an ATP-dependent pump, pulling dsDNA into and through the RuvAB complex. HJ branch migration allows RuvC to scan DNA until it finds its consensus sequence, where it cleaves and resolves the cruciform DNA. In Shewanella denitrificans (strain OS217 / ATCC BAA-1090 / DSM 15013), this protein is Holliday junction branch migration complex subunit RuvA.